Consider the following 253-residue polypeptide: Dof zinc finger protein DOF3.4 (253 aa).

The Dof-type zinc finger occupies 30-84 (LPCPRCDSSNTKFCYYNNYNFSQPRHFCKACRRYWTHGGTLRDVPVGGGTRKSAK). Positions 32, 35, 57, and 60 each coordinate Zn(2+). The segment at 73-103 (VPVGGGTRKSAKRSRTCSNSSSSSVSGVVSN) is disordered. Residues 90-103 (SNSSSSSVSGVVSN) show a composition bias toward low complexity.

Interacts with OBF4 or OBF5. As to expression, constitutively expressed in the whole plant.

It localises to the nucleus. Its function is as follows. Transcription factor that binds specifically to a 5'-AA[AG]G-3' consensus core sequence. Enhances the DNA binding of OBF transcription factors to OCS elements. The protein is Dof zinc finger protein DOF3.4 (DOF3.4) of Arabidopsis thaliana (Mouse-ear cress).